Consider the following 640-residue polypeptide: 1-deoxy-D-xylulose-5-phosphate synthase (640 aa).

Residues His79 and 120–122 (AHS) contribute to the thiamine diphosphate site. Residue Asp151 coordinates Mg(2+). Residues 152-153 (GA), Asn180, Tyr289, and Glu371 contribute to the thiamine diphosphate site. Asn180 contacts Mg(2+).

The protein belongs to the transketolase family. DXPS subfamily. Homodimer. Mg(2+) serves as cofactor. Thiamine diphosphate is required as a cofactor.

It catalyses the reaction D-glyceraldehyde 3-phosphate + pyruvate + H(+) = 1-deoxy-D-xylulose 5-phosphate + CO2. It participates in metabolic intermediate biosynthesis; 1-deoxy-D-xylulose 5-phosphate biosynthesis; 1-deoxy-D-xylulose 5-phosphate from D-glyceraldehyde 3-phosphate and pyruvate: step 1/1. In terms of biological role, catalyzes the acyloin condensation reaction between C atoms 2 and 3 of pyruvate and glyceraldehyde 3-phosphate to yield 1-deoxy-D-xylulose-5-phosphate (DXP). The sequence is that of 1-deoxy-D-xylulose-5-phosphate synthase from Novosphingobium aromaticivorans (strain ATCC 700278 / DSM 12444 / CCUG 56034 / CIP 105152 / NBRC 16084 / F199).